Consider the following 320-residue polypeptide: HPr kinase/phosphorylase (320 aa).

Residues histidine 141 and lysine 162 contribute to the active site. 156–163 (GHSGLGKS) contributes to the ATP binding site. Serine 163 contacts Mg(2+). The Proton acceptor; for phosphorylation activity. Proton donor; for dephosphorylation activity role is filled by aspartate 180. Residues 204-213 (LEVRGLGILN) are important for the catalytic mechanism of both phosphorylation and dephosphorylation. Position 205 (glutamate 205) interacts with Mg(2+). Arginine 248 is a catalytic residue. The tract at residues 269-274 (PVAVGR) is important for the catalytic mechanism of dephosphorylation.

The protein belongs to the HPrK/P family. As to quaternary structure, homohexamer. Requires Mg(2+) as cofactor.

The catalysed reaction is [HPr protein]-L-serine + ATP = [HPr protein]-O-phospho-L-serine + ADP + H(+). It carries out the reaction [HPr protein]-O-phospho-L-serine + phosphate + H(+) = [HPr protein]-L-serine + diphosphate. Functionally, catalyzes the ATP- as well as the pyrophosphate-dependent phosphorylation of a specific serine residue in HPr, a phosphocarrier protein of the phosphoenolpyruvate-dependent sugar phosphotransferase system (PTS). HprK/P also catalyzes the pyrophosphate-producing, inorganic phosphate-dependent dephosphorylation (phosphorolysis) of seryl-phosphorylated HPr (P-Ser-HPr). This Neisseria meningitidis serogroup C / serotype 2a (strain ATCC 700532 / DSM 15464 / FAM18) protein is HPr kinase/phosphorylase.